Here is a 136-residue protein sequence, read N- to C-terminus: Transmembrane protein 203 (136 aa).

4 helical membrane-spanning segments follow: residues 14 to 34 (FAQL…VLLA), 50 to 72 (FIPF…VRLF), 81 to 101 (VLRL…EMLL), and 112 to 132 (LWFG…MIRA).

The protein resides in the endoplasmic reticulum membrane. It localises to the endoplasmic reticulum-Golgi intermediate compartment. Functionally, involved in the regulation of cellular calcium homeotasis. May act as a regulator of STING-mediated inflammatory signaling in macrophages. The polypeptide is Transmembrane protein 203 (tmem203) (Xenopus tropicalis (Western clawed frog)).